Reading from the N-terminus, the 54-residue chain is Light-harvesting protein B-880 beta chain (54 aa).

Residues 1-20 lie on the Cytoplasmic side of the membrane; sequence AEDRSSLSGVSDAEAKEFHA. 2 residues coordinate a bacteriochlorophyll: H19 and H37. The chain crosses the membrane as a helical span at residues 21–43; it reads LFVSSFTAFIVIAVLAHVLAWAW. Over 44-54 the chain is Periplasmic; that stretch reads RPWIPGPKGWA.

It belongs to the antenna complex beta subunit family. As to quaternary structure, the core complex is formed by different alpha and beta chains, binding bacteriochlorophyll molecules, and arranged most probably in tetrameric structures disposed around the reaction center. The non-pigmented gamma chains may constitute additional components.

It localises to the cell inner membrane. Functionally, antenna complexes are light-harvesting systems, which transfer the excitation energy to the reaction centers. This chain is Light-harvesting protein B-880 beta chain, found in Rhodoblastus acidophilus (Rhodopseudomonas acidophila).